The chain runs to 222 residues: Small ribosomal subunit protein eS8z (222 aa).

Disordered stretches follow at residues 1–37 and 125–147; these read MGIS…ANTK and KKKS…VAAP. The span at 8-26 shows a compositional bias: basic residues; that stretch reads IHKRRATGGKQKQWRKKRK.

It belongs to the eukaryotic ribosomal protein eS8 family.

The protein is Small ribosomal subunit protein eS8z (RPS8A) of Arabidopsis thaliana (Mouse-ear cress).